The primary structure comprises 362 residues: Poly(rC)-binding protein 2 (362 aa).

2 KH domains span residues 13–75 (TLTI…FAMI) and 97–162 (PVTL…VKQI). A Glycyl lysine isopeptide (Lys-Gly) (interchain with G-Cter in SUMO2) cross-link involves residue K115. S169 carries the phosphoserine modification. Residue K181 forms a Glycyl lysine isopeptide (Lys-Gly) (interchain with G-Cter in SUMO2) linkage. Phosphoserine occurs at positions 185 and 268. The KH 3 domain occupies 284–348 (TTSHELTIPN…ASISLAQYLI (65 aa)). A Glycyl lysine isopeptide (Lys-Gly) (interchain with G-Cter in SUMO2) cross-link involves residue K319. Residues S361 and S362 each carry the phosphoserine modification.

Identified in a mRNP complex, at least composed of DHX9, DDX3X, ELAVL1, HNRNPU, IGF2BP1, ILF3, PABPC1, PCBP2, PTBP2, STAU1, STAU2, SYNCRIP and YBX1. Interacts with IFIH1 and RNF135. Interacts with MAVS (via C-terminus) and ITCH (via WW domains). Interacts with CGAS; preventing the formation of liquid-like droplets in which CGAS is activated. Post-translationally, phosphorylated. The non-phosphorylated form(s) exhibited the strongest poly(rC)-binding activity.

It is found in the nucleus. It localises to the cytoplasm. Functionally, single-stranded nucleic acid binding protein that binds preferentially to oligo dC. Major cellular poly(rC)-binding protein. Also binds poly(rU). Acts as a negative regulator of antiviral signaling. Negatively regulates cellular antiviral responses mediated by MAVS signaling. It acts as an adapter between MAVS and the E3 ubiquitin ligase ITCH, therefore triggering MAVS ubiquitination and degradation. Negativeley regulates the cGAS-STING pathway via interaction with CGAS, preventing the formation of liquid-like droplets in which CGAS is activated. Together with PCBP1, required for erythropoiesis, possibly by regulating mRNA splicing. In Mus musculus (Mouse), this protein is Poly(rC)-binding protein 2 (Pcbp2).